The primary structure comprises 634 residues: Transmembrane and coiled-coil domain-containing protein 4 (634 aa).

A coiled-coil region spans residues 150–190 (EELDVLEEMFLESLKEIKEEESEMAEASRKKKENRRKWKRY). Transmembrane regions (helical) follow at residues 203-223 (VIGV…ATII), 231-251 (LGSA…GAGL), and 346-366 (LSGI…ANVI). The interval 542-612 (EPRQAAAAAS…ERPPICSHGM (71 aa)) is disordered. Residues 552–583 (SGETPHQVGQTQGPISGDTSKLAMSTDPSQAQ) show a composition bias toward polar residues.

Belongs to the TMCO4 family.

Its subcellular location is the membrane. This is Transmembrane and coiled-coil domain-containing protein 4 (TMCO4) from Homo sapiens (Human).